Here is a 396-residue protein sequence, read N- to C-terminus: UPF0046 protein T07D4.2 (396 aa).

Residues 73–94 form a disordered region; sequence SRRGSIASGIPMDKKTRRKLSN.

Belongs to the UPF0046 family.

This Caenorhabditis elegans protein is UPF0046 protein T07D4.2.